The primary structure comprises 287 residues: Very long chain fatty acid elongase 4 (287 aa).

3 helical membrane passes run 33–53 (ILVY…EHIM), 64–84 (PFVF…YSCV), and 115–135 (FWVF…VFLV). The short motif at 145–149 (HWYHH) is the HxxHH motif element. His148 functions as the Nucleophile in the catalytic mechanism. 4 helical membrane-spanning segments follow: residues 150 to 170 (LTVA…GLWF), 172 to 192 (TMNY…ACGM), 199 to 219 (IAPF…LIVL), and 241 to 261 (LGLV…GKLY).

It belongs to the ELO family.

It is found in the membrane. It carries out the reaction a very-long-chain acyl-CoA + malonyl-CoA + H(+) = a very-long-chain 3-oxoacyl-CoA + CO2 + CoA. Involved in the synthesis of fatty acids. Elongates C16:0 and C18:0 fatty acids to C26:0, with C24:0 being the main product. The protein is Very long chain fatty acid elongase 4 of Trypanosoma cruzi (strain CL Brener).